We begin with the raw amino-acid sequence, 216 residues long: Putative transmembrane protein RNF32-DT (216 aa).

Residues 177 to 197 form a helical membrane-spanning segment; the sequence is WIPLLLVAGCVSCFVGLAVCV.

Expressed only in testis.

The protein resides in the cytoplasm. It is found in the membrane. The sequence is that of Putative transmembrane protein RNF32-DT from Homo sapiens (Human).